The primary structure comprises 223 residues: Adenine phosphoribosyltransferase (223 aa).

Belongs to the purine/pyrimidine phosphoribosyltransferase family. Homodimer.

It localises to the cytoplasm. The enzyme catalyses AMP + diphosphate = 5-phospho-alpha-D-ribose 1-diphosphate + adenine. The protein operates within purine metabolism; AMP biosynthesis via salvage pathway; AMP from adenine: step 1/1. Catalyzes a salvage reaction resulting in the formation of AMP, that is energically less costly than de novo synthesis. This is Adenine phosphoribosyltransferase from Mycobacterium bovis (strain ATCC BAA-935 / AF2122/97).